The primary structure comprises 246 residues: tRNA pseudouridine synthase A (246 aa).

The active-site Nucleophile is the D52. Y110 contributes to the substrate binding site.

It belongs to the tRNA pseudouridine synthase TruA family. Homodimer.

It carries out the reaction uridine(38/39/40) in tRNA = pseudouridine(38/39/40) in tRNA. In terms of biological role, formation of pseudouridine at positions 38, 39 and 40 in the anticodon stem and loop of transfer RNAs. The polypeptide is tRNA pseudouridine synthase A (Exiguobacterium sp. (strain ATCC BAA-1283 / AT1b)).